Reading from the N-terminus, the 20-residue chain is TRTPVNVTVTGAAGQIGYAL.

11–17 contributes to the NAD(+) binding site; sequence GAAGQIG.

It belongs to the LDH/MDH superfamily. MDH type 2 family.

It catalyses the reaction (S)-malate + NAD(+) = oxaloacetate + NADH + H(+). Catalyzes the reversible oxidation of malate to oxaloacetate. This chain is Malate dehydrogenase (mdh), found in Kibdelosporangium aridum.